The primary structure comprises 150 residues: Phosphoribosyl-AMP cyclohydrolase (150 aa).

Mg(2+) is bound at residue aspartate 93. Cysteine 94 contributes to the Zn(2+) binding site. 2 residues coordinate Mg(2+): aspartate 95 and aspartate 97. The Zn(2+) site is built by cysteine 112 and cysteine 119.

This sequence belongs to the PRA-CH family. Homodimer. Mg(2+) is required as a cofactor. Requires Zn(2+) as cofactor.

It localises to the cytoplasm. It carries out the reaction 1-(5-phospho-beta-D-ribosyl)-5'-AMP + H2O = 1-(5-phospho-beta-D-ribosyl)-5-[(5-phospho-beta-D-ribosylamino)methylideneamino]imidazole-4-carboxamide. It functions in the pathway amino-acid biosynthesis; L-histidine biosynthesis; L-histidine from 5-phospho-alpha-D-ribose 1-diphosphate: step 3/9. Its function is as follows. Catalyzes the hydrolysis of the adenine ring of phosphoribosyl-AMP. This chain is Phosphoribosyl-AMP cyclohydrolase, found in Rhizobium etli (strain ATCC 51251 / DSM 11541 / JCM 21823 / NBRC 15573 / CFN 42).